Here is a 314-residue protein sequence, read N- to C-terminus: Beta-ketoacyl-[acyl-carrier-protein] synthase III (314 aa).

Residues Cys112 and His241 contribute to the active site. The ACP-binding stretch occupies residues 242–246 (QANIR). Asn271 is an active-site residue.

Belongs to the thiolase-like superfamily. FabH family. Homodimer.

It is found in the cytoplasm. It carries out the reaction malonyl-[ACP] + acetyl-CoA + H(+) = 3-oxobutanoyl-[ACP] + CO2 + CoA. The protein operates within lipid metabolism; fatty acid biosynthesis. Its function is as follows. Catalyzes the condensation reaction of fatty acid synthesis by the addition to an acyl acceptor of two carbons from malonyl-ACP. Catalyzes the first condensation reaction which initiates fatty acid synthesis and may therefore play a role in governing the total rate of fatty acid production. Possesses both acetoacetyl-ACP synthase and acetyl transacylase activities. Its substrate specificity determines the biosynthesis of branched-chain and/or straight-chain of fatty acids. The sequence is that of Beta-ketoacyl-[acyl-carrier-protein] synthase III from Vesicomyosocius okutanii subsp. Calyptogena okutanii (strain HA).